A 1392-amino-acid chain; its full sequence is ABC transporter G family member 42 (1392 aa).

Over residues 1–18 (MTMSQTDGVEFASRNTNE) the composition is skewed to polar residues. The disordered stretch occupies residues 1–26 (MTMSQTDGVEFASRNTNENGHDDDDQ). The 275-residue stretch at 139-413 (SKLSRFMCSN…FEDCGFKCPN (275 aa)) folds into the ABC transporter 1 domain. 173-180 (GPPSCGKT) lines the ATP pocket. Residues 491–703 (DMLKACSRRE…AEIGLTANEF (213 aa)) form the ABC transmembrane type-2 1 domain. The next 6 helical transmembrane spans lie at 509 to 529 (FVYVFKSGLLIFIGFIAMTVY), 543 to 563 (YLMGSLFFSLFKLLADGLPEL), 596 to 616 (IPISFLESFLWTMLTYYVIGY), 627 to 647 (FLILFALHLSCISMFRAIAAV), 652 to 672 (VVATTVGSISIVLLSVFGGFI), and 739 to 759 (FGALIGFTLFFNTVFALALTF). Residues 800 to 1045 (FTFQDVQYII…VIEYFMRIHG (246 aa)) enclose the ABC transporter 2 domain. 837-844 (GVSGAGKT) contacts ATP. Positions 1117–1331 (EQFKACLWKQ…VLNGLLTSQY (215 aa)) constitute an ABC transmembrane type-2 2 domain. Transmembrane regions (helical) follow at residues 1136 to 1156 (YNLTRIIFMSFTCMLCGILFW), 1175 to 1195 (MFTVVLFSGINNCSTVLFSVA), 1215 to 1237 (YSLAQVLVEIPYSLFQSIVYVII), 1255 to 1275 (FYSIFCTLLIFNYFGMLLVVV), 1281 to 1301 (IAFTLRSSFYAIVNLFAGYVM), 1309 to 1329 (WWIWMYYLSPTSWVLNGLLTS), and 1364 to 1384 (LVAVVLIAFPILLASLFAFFI).

It belongs to the ABC transporter superfamily. ABCG family. PDR (TC 3.A.1.205) subfamily. Confined to shoots.

It is found in the membrane. May be a general defense protein. In Arabidopsis thaliana (Mouse-ear cress), this protein is ABC transporter G family member 42 (ABCG42).